A 1256-amino-acid chain; its full sequence is Octopamine receptor beta-3R (1256 aa).

Topologically, residues 1-143 (MSGVNVADLL…LDLSLLLLKG (143 aa)) are extracellular. Residues Asn36, Asn113, and Asn117 are each glycosylated (N-linked (GlcNAc...) asparagine). The chain crosses the membrane as a helical span at residues 144-164 (FIFSSIILAAVLGNALVIISV). The Cytoplasmic segment spans residues 165 to 171 (QRNRKLR). Residues 172–192 (VITNYFVVSLAMADMLVALCA) form a helical membrane-spanning segment. At 193 to 213 (MTFNASVELSGGKWMFGPFMC) the chain is on the extracellular side. Asn196 is a glycosylation site (N-linked (GlcNAc...) asparagine). A helical membrane pass occupies residues 214–236 (NVYNSLDVYFSTASILHLCCISV). Residues 237–258 (DRYYAIVRPLEYPLNMTHKTVC) are Cytoplasmic-facing. Residues 259–279 (FMLANVWILPALISFTPIFLG) traverse the membrane as a helical segment. Residues 280–305 (WYTTEEHLREISLHPDQCSFVVNKAY) lie on the Extracellular side of the membrane. Residues 306–326 (ALISSSVSFWIPGIVMLVMYW) traverse the membrane as a helical segment. Residues 327–1169 (RIFKEAIRQR…WKAEHKAART (843 aa)) lie on the Cytoplasmic side of the membrane. Disordered regions lie at residues 377–427 (AREE…DLRD), 480–512 (ELDK…ESTA), 665–698 (LSHS…NKPD), 751–774 (GESP…EPSG), and 1087–1117 (DTTV…SSTR). Residues 396-406 (TDEDDDRDECD) are compositionally biased toward acidic residues. A compositionally biased stretch (polar residues) spans 489-498 (NGPQQQLSLT). The span at 757-770 (PATPPPSLSPPELP) shows a compositional bias: pro residues. Residues 1170 to 1190 (LGIIMGVFLLCWLPFFLWYVI) form a helical membrane-spanning segment. The Extracellular segment spans residues 1191–1202 (TSLCGPACPCPD). Residues 1203–1223 (VLVVVLFWIGYFNSTLNPLIY) traverse the membrane as a helical segment. Over 1224 to 1256 (AYFNRDFREAFRNTLECVLPCLEKRNPYNAYYV) the chain is Cytoplasmic.

It belongs to the G-protein coupled receptor 1 family. As to expression, in the adult, expressed in the inferior and superior protocerebrum, the posterior lateral protocerebrum, the deutocerebrum, the surface of the subesophageal ganglion, the lateral cell body region, the cortical layer of the ventral nerve cord and the optic lobe medulla of the central nervous system (CNS). Also expressed in the nurse cells and follicle cells of the egg chambers in the ovary at oogenic stages 1-10, and spermatogonia and spermatocytes in the testis. Expressed ubiquitously in the embryonic CNS. In larvae, expressed in the ventral cortical layer of the ventral nerve cord, the cortical layer of the brain lobes, salivary glands, midgut, imaginal disks and developing reproductive organs. Expressed in the larval prothoracic gland with weak expression in other regions of the ring gland.

It localises to the cell membrane. Functionally, autoreceptor for octopamine, which is a neurotransmitter, neurohormone, and neuromodulator in invertebrates. Probably also acts as a receptor for tyramine during ecdysone biosynthesis. Required for the biosynthesis of the steroid hormone ecdysone which is necessary for metamorphosis. Involved in activation of prothoracicotropic hormone and insulin-like peptide signaling which is required for the expression of ecdysone biosynthetic genes. In Drosophila melanogaster (Fruit fly), this protein is Octopamine receptor beta-3R.